A 184-amino-acid polypeptide reads, in one-letter code: ADP-ribosylation factor-like protein 3 (184 aa).

Gly-2 carries N-myristoyl glycine lipidation. GTP contacts are provided by residues 24–31 (GLDNAGKT), 68–72 (DIGGQ), and 127–130 (NKQD).

Belongs to the small GTPase superfamily. Arf family.

The protein resides in the golgi apparatus. In terms of biological role, GTP-binding protein that may be involved in protein trafficking; may modulate vesicle budding and uncoating within the Golgi apparatus. The protein is ADP-ribosylation factor-like protein 3 (arl-3) of Caenorhabditis elegans.